The chain runs to 396 residues: NADH-quinone oxidoreductase subunit D (396 aa).

Belongs to the complex I 49 kDa subunit family. NDH-1 is composed of 14 different subunits. Subunits NuoB, C, D, E, F, and G constitute the peripheral sector of the complex.

Its subcellular location is the cell inner membrane. The enzyme catalyses a quinone + NADH + 5 H(+)(in) = a quinol + NAD(+) + 4 H(+)(out). Functionally, NDH-1 shuttles electrons from NADH, via FMN and iron-sulfur (Fe-S) centers, to quinones in the respiratory chain. The immediate electron acceptor for the enzyme in this species is believed to be ubiquinone. Couples the redox reaction to proton translocation (for every two electrons transferred, four hydrogen ions are translocated across the cytoplasmic membrane), and thus conserves the redox energy in a proton gradient. This chain is NADH-quinone oxidoreductase subunit D, found in Brucella anthropi (strain ATCC 49188 / DSM 6882 / CCUG 24695 / JCM 21032 / LMG 3331 / NBRC 15819 / NCTC 12168 / Alc 37) (Ochrobactrum anthropi).